Consider the following 606-residue polypeptide: UPF0329 protein ECU06_0090 (606 aa).

Residues 317–401 (KKEEERREEE…SREACSKERN (85 aa)) are disordered. Residues 328–353 (EKKRKEEVVQRNVEELLRGEEEEKKG) show a composition bias toward basic and acidic residues. Residues 354 to 367 (AKAKRKSKKKKKGS) show a composition bias toward basic residues. The span at 381 to 401 (SENREAQEMEDSREACSKERN) shows a compositional bias: basic and acidic residues.

It belongs to the UPF0329 family.

The sequence is that of UPF0329 protein ECU06_0090 from Encephalitozoon cuniculi (strain GB-M1) (Microsporidian parasite).